Here is a 443-residue protein sequence, read N- to C-terminus: Glutamyl-tRNA reductase (443 aa).

Substrate contacts are provided by residues 49–52 (TCNR), Ser109, 114–116 (ETQ), and Gln120. Residue Cys50 is the Nucleophile of the active site. Position 189–194 (189–194 (GAGEMS)) interacts with NADP(+).

It belongs to the glutamyl-tRNA reductase family. As to quaternary structure, homodimer.

It catalyses the reaction (S)-4-amino-5-oxopentanoate + tRNA(Glu) + NADP(+) = L-glutamyl-tRNA(Glu) + NADPH + H(+). The protein operates within porphyrin-containing compound metabolism; protoporphyrin-IX biosynthesis; 5-aminolevulinate from L-glutamyl-tRNA(Glu): step 1/2. Functionally, catalyzes the NADPH-dependent reduction of glutamyl-tRNA(Glu) to glutamate 1-semialdehyde (GSA). The chain is Glutamyl-tRNA reductase from Desulfitobacterium hafniense (strain DSM 10664 / DCB-2).